Consider the following 22-residue polypeptide: 65 kDa membrane protein (22 aa).

Residues 1–22 (AAKPLDKSSSSLHHGYSKVHVP) are disordered.

Its subcellular location is the cell membrane. Binds various plasma and ECM-proteins. This chain is 65 kDa membrane protein, found in Staphylococcus aureus.